The sequence spans 290 residues: Short neuropeptide F (290 aa).

Residues 1 to 32 form the signal peptide; the sequence is MFRFNPQLSHGCALALICCLLNLLMMHQPTNA. A propeptide spanning residues 33-87 is cleaved from the precursor; that stretch reads ELSPVVQGEFFLPILPDDHPPNTDTSFGGPISNLYDNLLQREYAGPVVFPNHQVE. F100 and F134 each carry phenylalanine amide. A propeptide spanning residues 138-290 is cleaved from the precursor; sequence DPTLPQMRRT…IETSSIAPKN (153 aa). Positions 238–290 are disordered; sequence VAGYANDGDDTEAQLDEDTSEFQREARKPMRLRWGRSTGKAPQIETSSIAPKN. Residues 244 to 257 are compositionally biased toward acidic residues; sequence DGDDTEAQLDEDTS. A compositionally biased stretch (polar residues) spans 281–290; that stretch reads IETSSIAPKN.

This sequence belongs to the NPY family.

Its subcellular location is the secreted. Its function is as follows. Plays a role in controlling food intake and regulating body size. The protein is Short neuropeptide F of Drosophila pseudoobscura pseudoobscura (Fruit fly).